The chain runs to 272 residues: Magnetosome protein MamQ 1 (272 aa).

Topologically, residues 1–46 (MALGDANVGSAPGVDFSALQRVKQSEELLAQLYVVEETPRRLGRGP) are cytoplasmic. Residues 47–67 (VHALMVISVLSVVAFIATLLM) form a helical membrane-spanning segment. Topologically, residues 68 to 272 (RYNTFVTMSE…PLNHAQDIKK (205 aa)) are lumenal.

This sequence belongs to the LemA family.

It localises to the magnetosome membrane. In terms of biological role, essential for magnetosome formation. Can be used to induce magnetosome formation. This Paramagnetospirillum magneticum (strain ATCC 700264 / AMB-1) (Magnetospirillum magneticum) protein is Magnetosome protein MamQ 1 (mamQ1).